A 526-amino-acid chain; its full sequence is Amine oxidase [flavin-containing] A (526 aa).

Residue methionine 1 is modified to N-acetylmethionine. Over 1–497 the chain is Cytoplasmic; sequence MTDLEKPNLA…HTFLERNLPS (497 aa). Serine 383 is subject to Phosphoserine. At cysteine 406 the chain carries S-8alpha-FAD cysteine. A helical; Anchor for type IV membrane protein membrane pass occupies residues 498–518; it reads VPGLLKITGVSTSVALLCFVL. Topologically, residues 519–526 are mitochondrial intermembrane; sequence YKIKKLPC. Residues 520-522 form an interaction with membrane phospholipid headgroups region; that stretch reads KIK.

This sequence belongs to the flavin monoamine oxidase family. In terms of assembly, monomer, homo- or heterodimer (containing two subunits of similar size). Each subunit contains a covalently bound flavin. Enzymatically active as monomer. FAD is required as a cofactor.

The protein localises to the mitochondrion outer membrane. It carries out the reaction a secondary aliphatic amine + O2 + H2O = a primary amine + an aldehyde + H2O2. The enzyme catalyses a primary methyl amine + O2 + H2O = an aldehyde + H2O2 + NH4(+). It catalyses the reaction (R)-adrenaline + O2 + H2O = (R)-3,4-dihydroxymandelaldehyde + methylamine + H2O2. The catalysed reaction is dopamine + O2 + H2O = 3,4-dihydroxyphenylacetaldehyde + H2O2 + NH4(+). It carries out the reaction tyramine + O2 + H2O = (4-hydroxyphenyl)acetaldehyde + H2O2 + NH4(+). The enzyme catalyses (R)-noradrenaline + O2 + H2O = (R)-3,4-dihydroxymandelaldehyde + H2O2 + NH4(+). It catalyses the reaction serotonin + O2 + H2O = (5-hydroxyindol-3-yl)acetaldehyde + H2O2 + NH4(+). The catalysed reaction is kynuramine + O2 + H2O = 3-(2-aminophenyl)-3-oxopropanal + H2O2 + NH4(+). It carries out the reaction tryptamine + O2 + H2O = indole-3-acetaldehyde + H2O2 + NH4(+). The enzyme catalyses 2-phenylethylamine + O2 + H2O = 2-phenylacetaldehyde + H2O2 + NH4(+). In terms of biological role, catalyzes the oxidative deamination of primary and some secondary amine such as neurotransmitters, with concomitant reduction of oxygen to hydrogen peroxide and has important functions in the metabolism of neuroactive and vasoactive amines in the central nervous system and peripheral tissues. Preferentially oxidizes serotonin. Also catalyzes the oxidative deamination of kynuramine to 3-(2-aminophenyl)-3-oxopropanal that can spontaneously condense to 4-hydroxyquinoline. In Rattus norvegicus (Rat), this protein is Amine oxidase [flavin-containing] A.